The sequence spans 716 residues: Mitochondrial Rho GTPase 1 (716 aa).

The Cytoplasmic segment spans residues 1-692; that stretch reads MSPDAIRVVV…VSVDQDDIKH (692 aa). The 222-residue stretch at 3–224 folds into the Miro 1 domain; that stretch reads PDAIRVVVCG…FYLCQRAVTH (222 aa). The tract at residues 58–99 is disordered; it reads NDQDHHHHHQSSPSTMKNKRKHNNKRERERERESSINNVQPN. GTP-binding positions include 84–91, 113–115, and 167–170; these read ERERERES, DTS, and NKSD. The region spanning 240–275 is the EF-hand 1 domain; the sequence is GAIKPLKRIFWLSDTDQDGYLNFEELSELHKKCFGI. Positions 253, 255, 257, 259, and 264 each coordinate Ca(2+). The segment at 303–327 is disordered; it reads TQTPPQQQHLATSAGTPNGTTTTTS. Residues 388-423 form the EF-hand 2 domain; it reads TGYKFFVDLFIKFDKDNDGGLNEDELNTLFRSTPGI. Residues Asp-401, Asp-403, Asp-405, and Glu-412 each contribute to the Ca(2+) site. The Miro 2 domain occupies 505–671; sequence RNVFNCFIVG…FIQLVDAAKT (167 aa). Residues 514–521, 550–554, and 620–623 each bind GTP; these read GAPKAGKS, ELRGG, and LKAD. Residues 693–713 form a helical; Anchor for type IV membrane protein membrane-spanning segment; sequence IIMTGAAIAVVGLVSIWVLNS. Residues 714–716 are Mitochondrial intermembrane-facing; the sequence is LRR.

It belongs to the mitochondrial Rho GTPase family.

It localises to the mitochondrion outer membrane. Its function is as follows. Mitochondrial GTPase involved in mitochondrial trafficking. Probably involved in control of anterograde transport of mitochondria and their subcellular distribution. The chain is Mitochondrial Rho GTPase 1 (GEM1) from Candida albicans (strain SC5314 / ATCC MYA-2876) (Yeast).